Here is a 348-residue protein sequence, read N- to C-terminus: Flagellar P-ring protein (348 aa).

Residues 1 to 24 form the signal peptide; the sequence is MRRKNNNKIWIWVATLILSISALY.

This sequence belongs to the FlgI family. In terms of assembly, the basal body constitutes a major portion of the flagellar organelle and consists of four rings (L,P,S, and M) mounted on a central rod.

Its subcellular location is the periplasm. The protein localises to the bacterial flagellum basal body. Its function is as follows. Assembles around the rod to form the L-ring and probably protects the motor/basal body from shearing forces during rotation. The sequence is that of Flagellar P-ring protein from Helicobacter hepaticus (strain ATCC 51449 / 3B1).